Consider the following 438-residue polypeptide: 3-phosphoshikimate 1-carboxyvinyltransferase (438 aa).

Residues lysine 20, serine 21, and arginine 25 each contribute to the 3-phosphoshikimate site. Lysine 20 serves as a coordination point for phosphoenolpyruvate. Residues glycine 90 and arginine 118 each coordinate phosphoenolpyruvate. 3-phosphoshikimate contacts are provided by serine 163, serine 164, glutamine 165, serine 191, aspartate 320, and lysine 347. Residue glutamine 165 coordinates phosphoenolpyruvate. The active-site Proton acceptor is the aspartate 320. Phosphoenolpyruvate-binding residues include arginine 351 and arginine 392.

The protein belongs to the EPSP synthase family. As to quaternary structure, monomer.

The protein localises to the cytoplasm. It carries out the reaction 3-phosphoshikimate + phosphoenolpyruvate = 5-O-(1-carboxyvinyl)-3-phosphoshikimate + phosphate. Its pathway is metabolic intermediate biosynthesis; chorismate biosynthesis. Its function is as follows. Catalyzes the transfer of the enolpyruvyl moiety of phosphoenolpyruvate (PEP) to the 5-hydroxyl of shikimate-3-phosphate (S3P) to produce enolpyruvyl shikimate-3-phosphate and inorganic phosphate. The protein is 3-phosphoshikimate 1-carboxyvinyltransferase of Natronomonas pharaonis (strain ATCC 35678 / DSM 2160 / CIP 103997 / JCM 8858 / NBRC 14720 / NCIMB 2260 / Gabara) (Halobacterium pharaonis).